The following is a 645-amino-acid chain: Macrolide export ATP-binding/permease protein MacB (645 aa).

Residues 6–244 (IELKDVTRYY…EAPQYRYARK (239 aa)) form the ABC transporter domain. Residue 42-49 (GQSGSGKS) coordinates ATP. 4 helical membrane-spanning segments follow: residues 271 to 291 (ALTLLGVVIGVSAVVAMLAIG), 520 to 540 (FSILLGSVAAISLLVGGIGVM), 577 to 597 (VVGGLGGIAGVAIGFGIVFII), and 608 to 628 (PLPAILAFSSALGTGLVFGLL).

The protein belongs to the ABC transporter superfamily. Macrolide exporter (TC 3.A.1.122) family. In terms of assembly, homodimer.

The protein localises to the cell inner membrane. Functionally, non-canonical ABC transporter that contains transmembrane domains (TMD), which form a pore in the inner membrane, and an ATP-binding domain (NBD), which is responsible for energy generation. Confers resistance against macrolides. The protein is Macrolide export ATP-binding/permease protein MacB of Hyphomonas neptunium (strain ATCC 15444).